The primary structure comprises 368 residues: Multifunctional CCA protein (368 aa).

2 residues coordinate ATP: Gly-8 and Arg-11. 2 residues coordinate CTP: Gly-8 and Arg-11. Residues Asp-21 and Asp-23 each contribute to the Mg(2+) site. ATP is bound by residues Arg-91, Arg-137, and Arg-140. Positions 91, 137, and 140 each coordinate CTP.

The protein belongs to the tRNA nucleotidyltransferase/poly(A) polymerase family. Bacterial CCA-adding enzyme type 1 subfamily. In terms of assembly, monomer. Can also form homodimers and oligomers. It depends on Mg(2+) as a cofactor. Requires Ni(2+) as cofactor.

The catalysed reaction is a tRNA precursor + 2 CTP + ATP = a tRNA with a 3' CCA end + 3 diphosphate. The enzyme catalyses a tRNA with a 3' CCA end + 2 CTP + ATP = a tRNA with a 3' CCACCA end + 3 diphosphate. In terms of biological role, catalyzes the addition and repair of the essential 3'-terminal CCA sequence in tRNAs without using a nucleic acid template. Adds these three nucleotides in the order of C, C, and A to the tRNA nucleotide-73, using CTP and ATP as substrates and producing inorganic pyrophosphate. tRNA 3'-terminal CCA addition is required both for tRNA processing and repair. Also involved in tRNA surveillance by mediating tandem CCA addition to generate a CCACCA at the 3' terminus of unstable tRNAs. While stable tRNAs receive only 3'-terminal CCA, unstable tRNAs are marked with CCACCA and rapidly degraded. This chain is Multifunctional CCA protein, found in Pseudomonas putida (strain ATCC 47054 / DSM 6125 / CFBP 8728 / NCIMB 11950 / KT2440).